We begin with the raw amino-acid sequence, 303 residues long: Elongation factor Ts (303 aa).

The involved in Mg(2+) ion dislocation from EF-Tu stretch occupies residues 79–82; sequence TDFT.

It belongs to the EF-Ts family.

The protein resides in the cytoplasm. In terms of biological role, associates with the EF-Tu.GDP complex and induces the exchange of GDP to GTP. It remains bound to the aminoacyl-tRNA.EF-Tu.GTP complex up to the GTP hydrolysis stage on the ribosome. This is Elongation factor Ts from Magnetococcus marinus (strain ATCC BAA-1437 / JCM 17883 / MC-1).